Here is a 96-residue protein sequence, read N- to C-terminus: Large ribosomal subunit protein bL27 (96 aa).

The tract at residues Lys-13–Ala-33 is disordered.

It belongs to the bacterial ribosomal protein bL27 family.

This Lactobacillus acidophilus (strain ATCC 700396 / NCK56 / N2 / NCFM) protein is Large ribosomal subunit protein bL27.